Consider the following 369-residue polypeptide: Uroporphyrinogen decarboxylase (369 aa).

The disordered stretch occupies residues 1–26; the sequence is MPVLHVDARPGSGPGGVSPPPSGAAL. Substrate-binding positions include 56 to 60, Asp-105, Tyr-180, Ser-235, and His-348; that span reads RQAGR.

This sequence belongs to the uroporphyrinogen decarboxylase family. In terms of assembly, homodimer.

It is found in the cytoplasm. The enzyme catalyses uroporphyrinogen III + 4 H(+) = coproporphyrinogen III + 4 CO2. Its pathway is porphyrin-containing compound metabolism; protoporphyrin-IX biosynthesis; coproporphyrinogen-III from 5-aminolevulinate: step 4/4. Its function is as follows. Catalyzes the decarboxylation of four acetate groups of uroporphyrinogen-III to yield coproporphyrinogen-III. In Frankia casuarinae (strain DSM 45818 / CECT 9043 / HFP020203 / CcI3), this protein is Uroporphyrinogen decarboxylase.